The following is a 314-amino-acid chain: MRLRFYYIPFMRLRTYAVAVSAILVAIALISMGTRGLNFGIDFTGGALVQLEFQQPPVIEEIRSHLSAVGLGDSTIQHFGSDREILVRAPIISDESAAAMELISLIRETLSAQYGDQMDVLRIETVGPRVGGELREQGTYAILYALLAIVAYIWWRYELNFGVAAVIALVHDVVITLGIFSLAGVTFSLPVLAAILTVIGYSLNDTIVVFDRIRENLYIPEGKEKPSIISIINTSITETLSRTILTSGTTLIVVAVLYFFGGEVINGFAFTLLVGIIVGTYSSIFVASLLLVYWRPRYIEPHLKKLQEKPEEVV.

A run of 6 helical transmembrane segments spans residues 17–37, 137–157, 158–178, 188–210, 250–270, and 272–292; these read AVAV…TRGL, QGTY…WWRY, ELNF…ITLG, SLPV…IVVF, TLIV…GFAF, and LLVG…LLLV.

The protein belongs to the SecD/SecF family. SecF subfamily. As to quaternary structure, forms a complex with SecD. Part of the essential Sec protein translocation apparatus which comprises SecA, SecYEG and auxiliary proteins SecDF. Other proteins may also be involved.

Its subcellular location is the cell inner membrane. Its function is as follows. Part of the Sec protein translocase complex. Interacts with the SecYEG preprotein conducting channel. SecDF uses the proton motive force (PMF) to complete protein translocation after the ATP-dependent function of SecA. This is Protein translocase subunit SecF from Desulfurispirillum indicum (strain ATCC BAA-1389 / DSM 22839 / S5).